The following is a 205-amino-acid chain: Adenylyl-sulfate kinase (205 aa).

An ATP-binding site is contributed by G31–S38. S105 serves as the catalytic Phosphoserine intermediate.

This sequence belongs to the APS kinase family.

The catalysed reaction is adenosine 5'-phosphosulfate + ATP = 3'-phosphoadenylyl sulfate + ADP + H(+). The protein operates within sulfur metabolism; hydrogen sulfide biosynthesis; sulfite from sulfate: step 2/3. Functionally, catalyzes the synthesis of activated sulfate. This Shewanella sp. (strain MR-7) protein is Adenylyl-sulfate kinase.